A 3122-amino-acid polypeptide reads, in one-letter code: Laminin subunit alpha-2 (3122 aa).

Residues 1 to 22 (MPGAAGVLLLLLLSGGLGGVQA) form the signal peptide. The Laminin N-terminal domain occupies 35–286 (QQRGLFPAVL…SVKDISVGGM (252 aa)). N-linked (GlcNAc...) asparagine glycosylation is found at N55 and N89. 6 cysteine pairs are disulfide-bonded: C287–C296, C289–C307, C309–C318, C321–C341, C344–C353, and C346–C378. Laminin EGF-like domains follow at residues 287–343 (CICY…ECEA), 344–413 (CNCH…PCQP), 414–468 (CHCD…DCKA), and 469–517 (CNCS…GCDE). N-linked (GlcNAc...) asparagine glycosylation is present at N303. Residues N363 and N380 are each glycosylated (N-linked (GlcNAc...) asparagine). 10 disulfides stabilise this stretch: C381/C390, C393/C411, C414/C426, C416/C442, C444/C453, C456/C466, C469/C482, C471/C486, C488/C497, and C500/C515. An N-linked (GlcNAc...) asparagine glycan is attached at N470. Positions 518 to 527 (CFCSGVSNRC) constitute a Laminin EGF-like 5; first part domain. The Laminin IV type A 1 domain maps to 531–723 (YWTYGKIQDM…DGSIAAAVEV (193 aa)). Residues 724–756 (CQCPPGYTGSSCESCWPRHRRVNGTIFGGICEP) enclose the Laminin EGF-like 5; second part domain. N-linked (GlcNAc...) asparagine glycosylation occurs at N746. Cystine bridges form between C757–C766, C759–C773, C776–C785, C788–C804, C807–C822, C809–C832, C835–C844, C847–C862, C865–C879, C867–C886, C889–C898, C901–C915, C918–C930, C920–C937, C939–C948, C951–C964, C967–C979, C969–C985, C987–C996, C999–C1011, C1014–C1023, C1016–C1030, C1032–C1041, C1044–C1057, C1060–C1072, C1062–C1079, C1081–C1090, C1093–C1103, C1106–C1118, C1108–C1134, C1136–C1145, and C1148–C1163. 8 consecutive Laminin EGF-like domains span residues 757–806 (CQCF…DCQP), 807–864 (CACP…SCQP), 865–917 (CQCN…NCQP), 918–966 (CRCN…GCVP), 967–1013 (CNCN…GCTA), 1014–1059 (CECS…GCKA), 1060–1105 (CNCS…RCNL), and 1106–1165 (CDCF…GCSS). N-linked (GlcNAc...) asparagine glycosylation occurs at N1061. The Laminin EGF-like 14; first part domain maps to 1166-1175 (CYCFGTTTQC). The Laminin IV type A 2 domain maps to 1176-1379 (SEAKGLIRTW…MTPPADLIEK (204 aa)). The 40-residue stretch at 1380-1419 (CDCPLGYSGLSCEACLPGFYRLRSQPGGRTPGPTLGTCVP) folds into the Laminin EGF-like 14; second part domain. Cystine bridges form between C1420/C1429, C1422/C1436, C1439/C1448, C1451/C1466, C1469/C1484, C1471/C1494, C1497/C1506, C1509/C1524, C1527/C1539, C1529/C1546, C1548/C1557, and C1560/C1571. 3 Laminin EGF-like domains span residues 1420-1468 (CQCN…DCQQ), 1469-1526 (CACP…SCQE), and 1527-1573 (CECD…ECVF). The tract at residues 1574 to 2144 (CGDECTGLLL…NQARKQANSI (571 aa)) is domain II and I. Residues N1597, N1614, N1700, N1810, N1901, N1916, N1920, N2017, N2028, N2045, N2126, and N2240 are each glycosylated (N-linked (GlcNAc...) asparagine). Positions 1630–2150 (ERLIQLAEGN…ANSIKVSVSS (521 aa)) form a coiled coil. 5 consecutive Laminin G-like domains span residues 2145–2328 (KVSV…CKGC), 2340–2521 (TIQF…TKGC), 2526–2710 (VYTV…IGRC), 2763–2934 (SKQF…VGTC), and 2939–3110 (QRGT…KALE). C2302 and C2328 are joined by a disulfide. 3 N-linked (GlcNAc...) asparagine glycosylation sites follow: N2360, N2435, and N2478. C2495 and C2521 are oxidised to a cystine. N-linked (GlcNAc...) asparagine glycosylation is found at N2551, N2558, and N2648. C2683 and C2710 are joined by a disulfide. N2868 and N2893 each carry an N-linked (GlcNAc...) asparagine glycan. A disulfide bridge connects residues C2909 and C2934. Residues 3043-3060 (GNQVEAQSPNPASTSADT) are compositionally biased toward polar residues. A disordered region spans residues 3043–3063 (GNQVEAQSPNPASTSADTNDP).

As to quaternary structure, laminin is a complex glycoprotein, consisting of three different polypeptide chains (alpha, beta, gamma), which are bound to each other by disulfide bonds into a cross-shaped molecule comprising one long and three short arms with globules at each end. Alpha-2 is a subunit of laminin-2 (laminin-211 or merosin), laminin-4 (laminin-221 or S-merosin) and laminin-12 (laminin-213). Interacts with FBLN1, FBLN2 and NID2. In terms of tissue distribution, placenta, striated muscle, peripheral nerve, cardiac muscle, pancreas, lung, spleen, kidney, adrenal gland, skin, testis, meninges, choroid plexus, and some other regions of the brain; not in liver, thymus and bone.

The protein resides in the secreted. It is found in the extracellular space. Its subcellular location is the extracellular matrix. The protein localises to the basement membrane. Binding to cells via a high affinity receptor, laminin is thought to mediate the attachment, migration and organization of cells into tissues during embryonic development by interacting with other extracellular matrix components. This Homo sapiens (Human) protein is Laminin subunit alpha-2 (LAMA2).